The chain runs to 109 residues: MYTKIALLGLVGSAAAFNAPMMTVRRDAIATGAAAAVVAPMLRPAGAAMKKDSKAPCVEVFDERDGCKAAGTQKASGDDGFCVKVSMKAIKMNAAEATSVTKNYNTKLL.

(2R,3E)-phycoerythrobilin is bound by residues Asp52, Ser53, Glu63, Arg64, Cys67, Thr72, Lys74, Ala75, and Lys84.

This sequence belongs to the phycoerythrin family. Heterotetramer of 2 different alpha chains and 2 identical beta chains which form 2 alpha-beta heterodimers within the heterotetramer. The two alpha-beta heterodimers are rotated to an open configuration in contrast to the closed configuration found in other cryptophyte species due to the insertion of a single amino acid, Asp-65, in a conserved region of the alpha chain. In the open form, the central chromophores are not in physical contact but are separated by a water-filled channel. Contains three phycoerythrobilin chromophores with binding mediated by both the alpha and beta subunits.

The protein resides in the plastid. It localises to the chloroplast thylakoid membrane. Functionally, light-harvesting photosynthetic tetrapyrrole chromophore-protein from the phycobiliprotein complex. The polypeptide is Phycoerythrin alpha-2 subunit (Hemiselmis andersenii (Cryptophyte alga)).